The primary structure comprises 147 residues: Hemoglobin subunit delta (147 aa).

Residues 3-147 (HLTPEEKAAV…VATALAHKYH (145 aa)) form the Globin domain. Residues His-64 and His-93 each contribute to the heme b site.

It belongs to the globin family. Heterotetramer of two delta chains and two alpha chains. Red blood cells.

The polypeptide is Hemoglobin subunit delta (HBD) (Ateles geoffroyi (Black-handed spider monkey)).